A 291-amino-acid polypeptide reads, in one-letter code: Ajmaline N-methyltransferase (291 aa).

The segment at 71–80 is SAM motif I; the sequence is MLDVGCGIGG. The short motif at 133–139 is the Vacuolar targeting signal element; sequence DGAFDLV. The segment at 134–142 is SAM motif II; it reads GAFDLVLSI. The segment at 161 to 170 is SAM motif III; sequence VAASGATIII.

The protein belongs to the class I-like SAM-binding methyltransferase superfamily. gTMT family. In terms of assembly, homodimer. As to expression, mainly expressed in roots, but barely detectable in stems and flowers.

The protein localises to the vacuole membrane. The enzyme catalyses ajmaline + S-adenosyl-L-methionine = 4-methylajmaline + S-adenosyl-L-homocysteine + H(+). The catalysed reaction is norajmaline + S-adenosyl-L-methionine = 4-methylnorajmaline + S-adenosyl-L-homocysteine + H(+). It functions in the pathway alkaloid biosynthesis; ajmaline biosynthesis. N-methyltransferase involved in the biosynthesis of ajmaline-type monoterpenoid indole alkaloids (MIAs) natural products, important plant-derived pharmaceuticals used in the therapy of heart disorders. Catalyzes the indole N-methylation of ajmaline to produce 4-methylajmaline. Also able, with a lower efficiency, to mediates the conversion of norajmaline to 4-methylnorajmaline. The protein is Ajmaline N-methyltransferase of Rauvolfia serpentina (Serpentine wood).